Reading from the N-terminus, the 391-residue chain is Mycofactocin maturase MftC (391 aa).

Residues 16–232 enclose the Radical SAM core domain; sequence LDAPICLTWE…KGERVLTGDS (217 aa). [4Fe-4S] cluster-binding residues include Cys-30, Cys-34, Cys-37, Cys-251, Cys-258, Cys-269, Cys-310, Cys-313, Cys-319, Cys-323, and Cys-341. The tract at residues 340-391 is disordered; the sequence is ECVQGHSEPALARERHLPRPRADHSRGRRVSKPVPLTLSMRPPKRPCNESPV. Residues 350-364 are compositionally biased toward basic and acidic residues; sequence LARERHLPRPRADHS.

This sequence belongs to the radical SAM superfamily. It depends on [4Fe-4S] cluster as a cofactor.

The enzyme catalyses [mycofactocin precursor peptide]-C-terminal glycyl-L-valyl-L-tyrosine + S-adenosyl-L-methionine = [mycofactocin precursor peptide]-C-terminal glycyl-N-{[2-(4-hydroxyphenyl)ethenyl]-3-methylbutanamide} + 5'-deoxyadenosine + L-methionine + CO2. It catalyses the reaction [mycofactocin precursor peptide]-C-terminal glycyl-N-{[2-(4-hydroxyphenyl)ethenyl]-3-methylbutanamide} + AH2 + S-adenosyl-L-methionine = [mycofactocin precursor peptide]-C-terminal glycyl-N-{5-[(4-hydroxyphenyl)methyl]-4,4-dimethyl-2-oxopyrrolidin-3-yl}acetamide + 5'-deoxyadenosine + L-methionine + A + H(+). Radical S-adenosylmethionine (SAM) enzyme responsible for the first step of the biosynthesis of the enzyme cofactor mycofactocin (MFT). Catalyzes two reactions at the C-terminus of the mycofactocin precursor (the MftA peptide). The first one is the oxidative decarboxylation of the C-terminal L-tyrosine of MftA, forming an unsaturated tyramine moiety. The second reaction is the cross-linking of the tyramine with the penultimate L-valine residue, forming a five-membered lactam ring. Its activity requires the presence of the MftB chaperone. This is Mycofactocin maturase MftC (mftC) from Mycobacterium tuberculosis (strain CDC 1551 / Oshkosh).